Here is a 141-residue protein sequence, read N- to C-terminus: Hemoglobin subunit alpha (141 aa).

In terms of domain architecture, Globin spans valine 1 to arginine 141. Serine 3 is modified (phosphoserine). N6-succinyllysine is present on residues lysine 7 and lysine 11. Position 16 is an N6-acetyllysine; alternate (lysine 16). At lysine 16 the chain carries N6-succinyllysine; alternate. Position 40 is an N6-succinyllysine (lysine 40). Serine 49 bears the Phosphoserine mark. Histidine 58 lines the O2 pocket. Histidine 87 serves as a coordination point for heme b. A Phosphoserine modification is found at serine 102. Residue threonine 108 is modified to Phosphothreonine. Residue serine 124 is modified to Phosphoserine. Phosphothreonine is present on residues threonine 134 and threonine 137. At serine 138 the chain carries Phosphoserine.

The protein belongs to the globin family. In terms of assembly, heterotetramer of two alpha chains and two beta chains. Red blood cells.

Its function is as follows. Involved in oxygen transport from the lung to the various peripheral tissues. Functionally, hemopressin acts as an antagonist peptide of the cannabinoid receptor CNR1. Hemopressin-binding efficiently blocks cannabinoid receptor CNR1 and subsequent signaling. The polypeptide is Hemoglobin subunit alpha (HBA) (Sus scrofa (Pig)).